The following is a 43-amino-acid chain: Probable intron-encoded DNA endonuclease 2 (43 aa).

This sequence belongs to the LAGLIDADG endonuclease family.

The protein localises to the mitochondrion. Functionally, mitochondrial DNA endonuclease involved in intron homing. The sequence is that of Probable intron-encoded DNA endonuclease 2 (hegI2) from Mycosarcoma maydis (Corn smut fungus).